We begin with the raw amino-acid sequence, 201 residues long: Casparian strip membrane protein 4 (201 aa).

Residues 1 to 23 form a disordered region; sequence MEGKAAVTTSTEHGDGEASRTAA. Residues 1–41 are Cytoplasmic-facing; sequence MEGKAAVTTSTEHGDGEASRTAARTVVSGSSRGGAASRALS. The chain crosses the membrane as a helical span at residues 42–62; sequence VADLILRVVAVVAIVDSAIAM. Topologically, residues 63–87 are extracellular; it reads GTTNQTLPFFTQFLRFKAQYSDLPT. The N-linked (GlcNAc...) asparagine glycan is linked to Asn-66. Residues 88 to 108 form a helical membrane-spanning segment; that stretch reads LTLFVVANSAVTAYLVLSIPL. Over 109-122 the chain is Cytoplasmic; that stretch reads SVVHIIRSRASYSR. Residues 123–143 traverse the membrane as a helical segment; that stretch reads LVLIFLDSVMLALVAAVASAS. Residues 144-172 lie on the Extracellular side of the membrane; that stretch reads AAIVYLAHKGNVRANWFAVCQQFDSFCER. Residues 173–193 form a helical membrane-spanning segment; it reads ISGPLIGSFAAMAVLLLLVLL. Residues 194-201 lie on the Cytoplasmic side of the membrane; that stretch reads SAAALARR.

The protein belongs to the Casparian strip membrane proteins (CASP) family. Homodimer and heterodimers.

It is found in the cell membrane. Regulates membrane-cell wall junctions and localized cell wall deposition. Required for establishment of the Casparian strip membrane domain (CSD) and the subsequent formation of Casparian strips, a cell wall modification of the root endodermis that determines an apoplastic barrier between the intraorganismal apoplasm and the extraorganismal apoplasm and prevents lateral diffusion. The polypeptide is Casparian strip membrane protein 4 (Oryza sativa subsp. japonica (Rice)).